Consider the following 316-residue polypeptide: protein SLOW GREEN 1, chloroplastic (316 aa).

The N-terminal 39 residues, 1-39 (MISSLSASSSLVSSFVAVKATPVTGPLIPRRDLLSIRIR), are a transit peptide targeting the chloroplast. 4 TPR repeats span residues 118–151 (VETL…QPEE), 152–185 (TEWK…NPLS), 226–259 (RDVR…DPKD), and 261–293 (RPYF…SPKK).

In terms of tissue distribution, ubiquitous. Preferentially expressed in newly formed green tissues.

Its subcellular location is the plastid. It localises to the chloroplast. In terms of biological role, required for the early stage of chloroplast development. May be involved in chloroplast protein biosynthesis and/or degradation. This chain is protein SLOW GREEN 1, chloroplastic, found in Arabidopsis thaliana (Mouse-ear cress).